Consider the following 598-residue polypeptide: Elongation factor 4 (598 aa).

The tr-type G domain maps to 2 to 183 (KKIRNFCIIA…AIIEKIPPPK (182 aa)). Residues 14–19 (DHGKST) and 130–133 (NKVD) contribute to the GTP site.

The protein belongs to the TRAFAC class translation factor GTPase superfamily. Classic translation factor GTPase family. LepA subfamily.

The protein localises to the cell inner membrane. It carries out the reaction GTP + H2O = GDP + phosphate + H(+). Functionally, required for accurate and efficient protein synthesis under certain stress conditions. May act as a fidelity factor of the translation reaction, by catalyzing a one-codon backward translocation of tRNAs on improperly translocated ribosomes. Back-translocation proceeds from a post-translocation (POST) complex to a pre-translocation (PRE) complex, thus giving elongation factor G a second chance to translocate the tRNAs correctly. Binds to ribosomes in a GTP-dependent manner. This Flavobacterium johnsoniae (strain ATCC 17061 / DSM 2064 / JCM 8514 / BCRC 14874 / CCUG 350202 / NBRC 14942 / NCIMB 11054 / UW101) (Cytophaga johnsonae) protein is Elongation factor 4.